A 545-amino-acid polypeptide reads, in one-letter code: Glucose-6-phosphate isomerase (545 aa).

Catalysis depends on glutamate 351, which acts as the Proton donor. Active-site residues include histidine 382 and lysine 510.

Belongs to the GPI family.

The protein localises to the cytoplasm. It catalyses the reaction alpha-D-glucose 6-phosphate = beta-D-fructose 6-phosphate. It participates in carbohydrate biosynthesis; gluconeogenesis. It functions in the pathway carbohydrate degradation; glycolysis; D-glyceraldehyde 3-phosphate and glycerone phosphate from D-glucose: step 2/4. In terms of biological role, catalyzes the reversible isomerization of glucose-6-phosphate to fructose-6-phosphate. In Shewanella sp. (strain MR-7), this protein is Glucose-6-phosphate isomerase.